Consider the following 609-residue polypeptide: CTTNBP2 N-terminal-like protein (609 aa).

Over residues 1–10 (MEQNSNSSVA) the composition is skewed to polar residues. The tract at residues 1-29 (MEQNSNSSVADTFAEAPATDADYGTENCS) is disordered. Coiled-coil stretches lie at residues 182-264 (RMVN…QKQI) and 303-370 (IAEG…QQLG). Residues 556 to 584 (PPAGARGAPPPIPTKPIVPPKREPSLSRL) form a disordered region. Residues 563-574 (APPPIPTKPIVP) show a composition bias toward pro residues. At serine 586 the chain carries Phosphoserine.

The protein resides in the cell projection. It localises to the lamellipodium. It is found in the cytoplasm. Its subcellular location is the cytoskeleton. The protein localises to the stress fiber. Its function is as follows. Regulates lamellipodial actin dynamics in a Cortactin-dependent manner and is therefore likely involved in controlling actin branch density, actin-retrograde flow rates and lamellipodial protrusion. Functions by slowing the dissociation of Cortactin from Arp2/3 nucleated branches thereby increasing branch nucleation and junction stability. Associates with core striatin-interacting phosphatase and kinase (STRIPAK) complex to form CTTNBP2NL-STRIPAK complexes. STRIPAK complexes have critical roles in protein (de)phosphorylation and are regulators of multiple signaling pathways including Hippo, MAPK, nuclear receptor and cytoskeleton remodeling. Different types of STRIPAK complexes are involved in a variety of biological processes such as cell growth, differentiation, apoptosis, metabolism and immune regulation. The chain is CTTNBP2 N-terminal-like protein from Drosophila melanogaster (Fruit fly).